We begin with the raw amino-acid sequence, 199 residues long: Probable cobalt-precorrin-6B C(15)-methyltransferase (decarboxylating) (199 aa).

S-adenosyl-L-methionine contacts are provided by residues T24, 48 to 52 (GCGTG), D72, and A101.

The protein belongs to the methyltransferase superfamily. Archaeal-type CbiT family.

It catalyses the reaction Co-precorrin-6B + S-adenosyl-L-methionine = Co-precorrin-7 + S-adenosyl-L-homocysteine + CO2. The protein operates within cofactor biosynthesis; adenosylcobalamin biosynthesis; cob(II)yrinate a,c-diamide from sirohydrochlorin (anaerobic route): step 8/10. In terms of biological role, catalyzes the methylation of C-15 in cobalt-precorrin-6B followed by the decarboxylation of C-12 to form cobalt-precorrin-7. The protein is Probable cobalt-precorrin-6B C(15)-methyltransferase (decarboxylating) of Saccharolobus islandicus (strain Y.N.15.51 / Yellowstone #2) (Sulfolobus islandicus).